Here is a 455-residue protein sequence, read N- to C-terminus: Nucleoprotein (455 aa).

A disordered region spans residues 1 to 62 (MSFVPGQENA…ATTQPNSGSV (62 aa)). Over residues 9–23 (NAGSRSSSGNRAGNG) the composition is skewed to low complexity. Composition is skewed to polar residues over residues 30–42 (WADQTERGLNNQN) and 49–61 (PKQTATTQPNSGS). An RNA-binding region spans residues 56–197 (QPNSGSVVPH…GFYVEGSGRS (142 aa)). The region spanning 64–193 (PHYSWFSGIT…VLPQGFYVEG (130 aa)) is the CoV N NTD domain. Arg-109, Arg-125, and Arg-167 together coordinate RNA. Disordered stretches follow at residues 159–230 (RTSA…STVK), 271–290 (PRQKRTPNKQCPVQQCFGKR), and 382–429 (QDGG…RELT). Ser-170 is subject to Phosphoserine; by host. Thr-177 is modified (phosphothreonine; by host). Low complexity predominate over residues 193 to 212 (GSGRSAPASRSGSRPQSRGP). At Ser-194 the chain carries Phosphoserine; by host. Polar residues predominate over residues 215–227 (RARSSSNQRQPAS). A CoV N CTD domain is found at 260–383 (AKEVRQKILN…ENLNAYQNQD (124 aa)). The tract at residues 267–384 (ILNKPRQKRT…NLNAYQNQDG (118 aa)) is dimerization. The residue at position 390 (Ser-390) is a Phosphoserine; by host. Basic residues predominate over residues 393 to 402 (PQRKRGTKQK). Ser-425 carries the phosphoserine; by host modification. Position 429 is a phosphothreonine; by host (Thr-429).

This sequence belongs to the betacoronavirus nucleocapsid protein family. As to quaternary structure, homooligomer. Both monomeric and oligomeric forms interact with RNA. Interacts with protein M. Interacts with NSP3; this interaction serves to tether the genome to the newly translated replicase-transcriptase complex at a very early stage of infection. Interacts (when phosphorylated) with host DDX1; this interaction is essential to produce a full set of subgenomic and genomic RNAs. Post-translationally, ADP-ribosylated. The ADP-ribosylation is retained in the virion during infection. Phosphorylated on serine and threonine residues. Phosphorylated by host GSK3A and GSK3B. Phosphorylation allows recruitment of host RNA helicase DDX1 which facilitates template readthrough and enables longer subgenomic mRNA synthesis.

It is found in the virion. It localises to the host endoplasmic reticulum-Golgi intermediate compartment. The protein localises to the host Golgi apparatus. Packages the positive strand viral genome RNA into a helical ribonucleocapsid (RNP) and plays a fundamental role during virion assembly through its interactions with the viral genome and membrane protein M. Plays an important role in enhancing the efficiency of subgenomic viral RNA transcription as well as viral replication. This chain is Nucleoprotein, found in Murine coronavirus (strain JHM) (MHV-JHM).